The primary structure comprises 377 residues: Delta(12) fatty acid desaturase DES8.11 (377 aa).

2 helical membrane-spanning segments follow: residues 55–75 (LIVA…IPTP) and 79–99 (LAWP…WVIG). The Histidine box-1 signature appears at 100-104 (HECGH). A helical transmembrane segment spans residues 112 to 132 (LIDDIVGFVLHSALLTPYFSW). The Histidine box-2 signature appears at 136-140 (HRNHH). The next 3 helical transmembrane spans lie at 174 to 194 (VFTL…TNIS), 220 to 240 (VLLS…LVAA), and 244 to 264 (AWVI…FVLI). Positions 310 to 314 (HVLHH) match the Histidine box-3 motif.

This sequence belongs to the fatty acid desaturase type 1 family.

It is found in the membrane. It participates in lipid metabolism; polyunsaturated fatty acid biosynthesis. In terms of biological role, converts linoleic acid into a conjugated octadecatrienoic acid, probably calendic acid. In Calendula officinalis (Pot marigold), this protein is Delta(12) fatty acid desaturase DES8.11.